The following is an 870-amino-acid chain: Importin subunit beta-1 (870 aa).

Alanine 2 carries the post-translational modification N-acetylalanine. 18 HEAT repeats span residues 4 to 33, 35 to 67, 87 to 126, 132 to 161, 172 to 204, 214 to 249, 255 to 304, 313 to 361, 365 to 395, 403 to 440, 456 to 492, 498 to 535, 542 to 588, 596 to 637, 642 to 679, 684 to 722, 730 to 776, and 826 to 868; these read EVTQLLINAQSIDGTVRKHAEESLKQFQEQ, LAGFLLSLAGELANDEKPVDSRKLAGLVLKNAL, MSTKSQIRAFLLKTLSAPVPDVRSTASQVIAKVAGIELPQ, LIVSLLSNIHQLPAHVKQATLETLGYLCEE, VNKILTAVVQGMNAAEGNTDVRLAATRALYMAL, DMERDYIMRVVCEATLSPEVKIRQAAFECLVSIAST, AHYM…EFAG, FTKQ…RAVG, VPHVMPFIEEKISKPDWREREAATYAFGSIL, LMAIVNAALTFMLNALTNDPSNHVKDTTAWTLGRIFEF, CQQIITVLIQSMNDAPNVAEKACGALYFLAQGYEDIG, TPFFQEIIKSLLAVAHREDATESRLRTAAYEALNEVVR, STMV…QVII, TKSK…AYAA, AKYMPEFYKYLEMGLQNFEEYQVCAVTVGVVGDVCRAL, LPYCDGIMTQLLKDLSSNQLHRSVKPPIFSCFGDIALAI, WRYS…FQGF, and SHVG…TRAI. One can recognise an Importin N-terminal domain in the interval 23–103; the sequence is AEESLKQFQE…RAFLLKTLSA (81 aa).

The protein belongs to the importin beta family. Importin beta-1 subfamily. In terms of assembly, forms a complex with the importin subunits alpha IMPA1 or IMPA2, the nucleoporin NUP62 and the Ran-GTP-binding proteins RAN1, RAN2 or RAN3. Expressed in roots, cotyledons, leaves, stems, petals, stamen, stigma, siliques, embryos and guard cells.

Its subcellular location is the cytoplasm. The protein resides in the nucleus. Functionally, acts as a negative effector of drought tolerance. Involved in the regulation of stomatal closure and in the abscisic acid (ABA)-mediated pathway that lead to drought tolerance. Does not directly mediate nuclear import of ABI1 and ABI2 which are key regulators of the ABA signaling pathway. May be involved in nuclear translocation of other type 2C protein phosphatases that mediate ABA signaling. The chain is Importin subunit beta-1 from Arabidopsis thaliana (Mouse-ear cress).